The following is a 1064-amino-acid chain: Adenylate cyclase type 4 (1064 aa).

Residues 1 to 28 (MARLFSPRPPPSEDLFYETYYSLSQQYP) lie on the Cytoplasmic side of the membrane. 6 helical membrane-spanning segments follow: residues 29–50 (LLILLLVIVLCAIVALPAVAWA), 61–80 (FLTTVLCALGGFSLLLGLAS), 94–117 (GLIWAALLALGYGFLFTGGVVSAW), 120–138 (VSFFLFIIFTVYAMLPLGM), 141–162 (AAAAGVISSLSHLLVLGLYLGW), and 170–190 (LLPQLAANAVLFLCGNVVGAY). The Cytoplasmic segment spans residues 191-582 (HKALMERALR…YRLSALPAFK (392 aa)). 3 residues coordinate Mg(2+): Asp-278, Ile-279, and Asp-322. ATP contacts are provided by residues 278-283 (DIVGFT), 320-322 (LGD), and Arg-366. The interval 498 to 523 (DSPASTSTPLPEKAFSPQWSLDRSRT) is disordered. A Phosphoserine modification is found at Ser-517. Residue Thr-533 is modified to Phosphothreonine. 3 helical membrane passes run 583 to 604 (YYAACTFLVFLSNFTIQMLVTT), 608 to 630 (ALATTYSITFLLFLLLLFVCFSE), and 661 to 684 (VALGTATILLVFTMAVVSLLFLPV). The Extracellular segment spans residues 685-707 (SSDCPFLAPNVSSVAFNTSWELP). 2 N-linked (GlcNAc...) asparagine glycosylation sites follow: Asn-694 and Asn-701. A run of 3 helical transmembrane segments spans residues 708–733 (ASLPLISIPYSMHCCVLGFLSCSLFL), 741–761 (LLLLLLWLVASCSLFLHSHAW), and 788–804 (MGAIYFFIFFFTLLVLA). Over 805–1064 (RQNEYYCRLD…LTRTGSPSAS (260 aa)) the chain is Cytoplasmic. ATP-binding positions include Lys-914, 994 to 996 (DIW), 1001 to 1005 (NVASR), and Lys-1041.

This sequence belongs to the adenylyl cyclase class-4/guanylyl cyclase family. Mg(2+) serves as cofactor. Mn(2+) is required as a cofactor. As to expression, widely distributed.

The protein resides in the cell membrane. It is found in the cytoplasm. It carries out the reaction ATP = 3',5'-cyclic AMP + diphosphate. Activated by forskolin. Insensitive to calcium/calmodulin. Stimulated by GNAS and by the G-protein beta and gamma subunit complex. Catalyzes the formation of the signaling molecule cAMP in response to G-protein signaling. This chain is Adenylate cyclase type 4 (Adcy4), found in Rattus norvegicus (Rat).